Consider the following 502-residue polypeptide: MMTAPLPDIAAPAAPPRRLPFSFAKRQGLLFLCLEEQYWLACRPQVELAAIAEAQRFAGRRLPLKALGEDAFNQALAASYQHDSSAAMQLAEDLGGSLDLAALADQVPETEDLMEQEDDAPIIRLINAILGEAIRENASDIHLETFEKRLVVRFRVDGVLREVLEPKRELAALLVSRIKVMARLDIAEKRIPQDGRISLRVGGREVDIRVSTLPSANGERVVLRLLDKQAGRLNLQHLGMSERDRKLMDETVRKPHGILLVTGPTGSGKTTTLYASLTTLNDRTRNILTVEDPIEYHLEGIGQTQVNAKVDMTFARGLRAILRQDPDVVMVGEIRDRETAEIAVQASLTGHLVLSTLHTNSAIGAITRLVDMGIEPFLLSSSMLGVLAQRLVRVLCPACKEPYRADEAECALLGVDPAAPPTLHRARGCGECHQHGYRGRTGIYELVVFDDHMRSLIHNESSEQEMTRHARTSGPSIRDDGRRKVLEGVTTVEEVLRVTREE.

263-270 (GPTGSGKT) lines the ATP pocket. Residues Cys-396, Cys-399, Cys-429, and Cys-432 each coordinate Zn(2+). Positions 461-480 (SSEQEMTRHARTSGPSIRDD) are disordered.

The protein belongs to the GSP E family. In terms of assembly, homodimer. Dimerization is directed by a relatively short domain near the extreme N-terminus and is essential for extracellular protein secretion. May form homooligomers. Interacts with XcpY/GspL. Forms an inner membrane platform subcomplex with XcpS/GspF, XcpY/GspL and XcpZ/GspM. It depends on Zn(2+) as a cofactor.

It localises to the cell inner membrane. It carries out the reaction ATP + H2O + cellular proteinSide 1 = ADP + phosphate + cellular proteinSide 2.. Functionally, ATPase component of the type II secretion system required for the energy-dependent secretion of extracellular factors such as proteases and toxins from the periplasm. Acts as a molecular motor to provide the energy that is required for assembly of the pseudopilus and the extrusion of substrates generated in the cytoplasm. The chain is Type II secretion system protein E (xcpR) from Pseudomonas aeruginosa (strain ATCC 15692 / DSM 22644 / CIP 104116 / JCM 14847 / LMG 12228 / 1C / PRS 101 / PAO1).